Here is a 169-residue protein sequence, read N- to C-terminus: Caltractin (169 aa).

The interval 1–24 is disordered; it reads MSYRKTVVSARRDQKKGRVGGLTE. 4 consecutive EF-hand domains span residues 25–60, 61–96, 98–133, and 134–169; these read EQKQ…LGFE, PKKE…KMGE, DSRE…LGEN, and LTDE…TSLF. Ca(2+) is bound by residues D38, D40, S42, T44, and E49. Positions 147, 149, 151, 153, and 158 each coordinate Ca(2+).

Belongs to the centrin family.

Functionally, this calcium-binding protein is found in the basal body complexes (the functional homolog of the centrosome in animal cell). In mitotic cells it is specifically associated with the poles of the mitotic spindles at the sites of the duplicated basal body complexes. In Dunaliella salina (Green alga), this protein is Caltractin.